A 268-amino-acid polypeptide reads, in one-letter code: Kynurenine formamidase (268 aa).

The HGGXW motif lies at 33-37 (HGGGW). Residue Ser-107 is the Nucleophile of the active site. Residues Asp-219 and His-251 contribute to the active site.

It belongs to the kynurenine formamidase family. As to quaternary structure, homodimer.

The catalysed reaction is N-formyl-L-kynurenine + H2O = L-kynurenine + formate + H(+). It functions in the pathway amino-acid degradation; L-tryptophan degradation via kynurenine pathway; L-kynurenine from L-tryptophan: step 2/2. Functionally, catalyzes the hydrolysis of N-formyl-L-kynurenine to L-kynurenine, the second step in the kynurenine pathway of tryptophan degradation. Kynurenine may be further oxidized to nicotinic acid, NAD(H) and NADP(H). Required for elimination of toxic metabolites. This is Kynurenine formamidase from Scheffersomyces stipitis (strain ATCC 58785 / CBS 6054 / NBRC 10063 / NRRL Y-11545) (Yeast).